A 412-amino-acid chain; its full sequence is L-threonine:uridine-5'-aldehyde transaldolase (412 aa).

K229 bears the N6-(pyridoxal phosphate)lysine mark.

It belongs to the SHMT family. It depends on pyridoxal 5'-phosphate as a cofactor.

The enzyme catalyses uridine-5'-aldehyde + L-threonine = (5'S,6'S)-C-glycyluridine + acetaldehyde. It participates in antibiotic biosynthesis. Functionally, transaldolase involved in the biosynthesis of the capuramycin-type nucleoside antibiotic A-503083. Catalyzes the condensation of L-threonine and uridine-5'-aldehyde to form 5'-C-glycyluridine (GlyU). Forms (5'S,6'S)-GlyU. The polypeptide is L-threonine:uridine-5'-aldehyde transaldolase (Streptomyces sp).